Here is a 177-residue protein sequence, read N- to C-terminus: MVAIKNLVLVALTAVTALAVPSPLEARAVTWTCLNDQKNPKTNKYETKRLLYNQNKAESNSHHAPLSDGKTGSSYPHWFTNGYDGDGKLPKGRTPIKFGKSDCDRPPKHSKDGNGKTDHYLLEFPTFPDGHDYKFDSKKPKENPGPARVIYTYPNKVFCGIIAHTKENQGELKLCSH.

A signal peptide spans 1–27 (MVAIKNLVLVALTAVTALAVPSPLEAR). 2 disulfides stabilise this stretch: Cys-33-Cys-175 and Cys-103-Cys-159. His-77 is a catalytic residue. Positions 86–119 (DGKLPKGRTPIKFGKSDCDRPPKHSKDGNGKTDH) are disordered. The segment covering 99 to 119 (GKSDCDRPPKHSKDGNGKTDH) has biased composition (basic and acidic residues). Glu-123 serves as the catalytic Proton acceptor. His-164 (proton donor) is an active-site residue.

Belongs to the ribonuclease U2 family.

It localises to the secreted. It catalyses the reaction a 28S rRNA containing guanosine-adenosine pair + H2O = an [RNA fragment]-3'-adenosine-3'-phosphate + a 5'-a hydroxy-guanosine-3'-[RNA fragment].. Alpha-sarcin is specific for purines in both single- and double-stranded RNA. Its toxic action on eukaryotic cells is the result of cleavage of a single phosphodiester bond in the 60S subunit of ribosomes. Inhibits both the EFl (elongation factor 1)-dependent binding of aminoacyl-tRNA and the GTP-dependent binding of EF2 (elongation factor 2) to ribosomes. This chain is Ribonuclease alpha-sarcin (sar), found in Aspergillus giganteus.